The sequence spans 499 residues: Cytochrome P450 81Q32 (499 aa).

A helical transmembrane segment spans residues 5–25 (TLLYTFLAVVLLSISLKLFPV). 3 N-linked (GlcNAc...) asparagine glycosylation sites follow: N112, N183, and N266. C434 contacts heme.

The protein belongs to the cytochrome P450 family. As to expression, expressed in leaf epidermis and in the leaf internal phloem-associated parenchyma (IPAP) inside the mesophyll.

It is found in the membrane. The chain is Cytochrome P450 81Q32 from Catharanthus roseus (Madagascar periwinkle).